Reading from the N-terminus, the 79-residue chain is MGSFSIWHWLIVLAIVVLVFGTKKLKNIGSDLGGAVKGFKDGVKDGSTSTDTPAAAPGQVAGQTAADKTTIDVEAKQKG.

Residues 1-21 form a helical membrane-spanning segment; that stretch reads MGSFSIWHWLIVLAIVVLVFG. Positions 43–79 are disordered; sequence VKDGSTSTDTPAAAPGQVAGQTAADKTTIDVEAKQKG. A compositionally biased stretch (basic and acidic residues) spans 69-79; the sequence is TTIDVEAKQKG.

The protein belongs to the TatA/E family. As to quaternary structure, the Tat system comprises two distinct complexes: a TatABC complex, containing multiple copies of TatA, TatB and TatC subunits, and a separate TatA complex, containing only TatA subunits. Substrates initially bind to the TatABC complex, which probably triggers association of the separate TatA complex to form the active translocon.

The protein resides in the cell inner membrane. Functionally, part of the twin-arginine translocation (Tat) system that transports large folded proteins containing a characteristic twin-arginine motif in their signal peptide across membranes. TatA could form the protein-conducting channel of the Tat system. The sequence is that of Sec-independent protein translocase protein TatA from Delftia acidovorans (strain DSM 14801 / SPH-1).